Reading from the N-terminus, the 452-residue chain is MARRYFGTDGIRGKVGDPPITPDFVLRLGYAAGKVLAGADTWAKTGSRPTVLIGKDTRVSGYMLEAALESGFSAAGVDVMLAGPMPTPGVAYLTRALRLAAGVVISASHNPYYDNGIKFFSADGNKLPDEVESQIEEQLDKPLECAPSERLGKARRLDDAAGRYIEFCKGTFPQAFDLRGMKLVVDCAHGAAYDVAPHVFHELGADVITIGVSPNGFNINDGVGATAPDALVRAVRANKADLGVALDGDADRLQIVDANGRLYNGDELLYVLVQDRIATQGKVDGAVGTLMTNMAVEVALKNKGVQFVRAAVGDRYVLEKLREHGWELGAEGSGHILSLDRHSTGDGIVSALLVLAAMQRSGRSLEQLLEGVTLFPQKLINVRMQPGADWKGNDAIRRAINEAEGALDGSGRVLIRASGTEPVLRVMVEAAHEKDAVHHAERIATVVKQATS.

The active-site Phosphoserine intermediate is the Ser-108. Positions 108, 247, 249, and 251 each coordinate Mg(2+). At Ser-108 the chain carries Phosphoserine.

Belongs to the phosphohexose mutase family. Requires Mg(2+) as cofactor. Post-translationally, activated by phosphorylation.

It catalyses the reaction alpha-D-glucosamine 1-phosphate = D-glucosamine 6-phosphate. In terms of biological role, catalyzes the conversion of glucosamine-6-phosphate to glucosamine-1-phosphate. The polypeptide is Phosphoglucosamine mutase (Paraburkholderia phymatum (strain DSM 17167 / CIP 108236 / LMG 21445 / STM815) (Burkholderia phymatum)).